Here is a 106-residue protein sequence, read N- to C-terminus: Pyrimidine/purine nucleoside phosphorylase (106 aa).

It belongs to the nucleoside phosphorylase PpnP family.

It carries out the reaction a purine D-ribonucleoside + phosphate = a purine nucleobase + alpha-D-ribose 1-phosphate. The enzyme catalyses adenosine + phosphate = alpha-D-ribose 1-phosphate + adenine. It catalyses the reaction cytidine + phosphate = cytosine + alpha-D-ribose 1-phosphate. The catalysed reaction is guanosine + phosphate = alpha-D-ribose 1-phosphate + guanine. It carries out the reaction inosine + phosphate = alpha-D-ribose 1-phosphate + hypoxanthine. The enzyme catalyses thymidine + phosphate = 2-deoxy-alpha-D-ribose 1-phosphate + thymine. It catalyses the reaction uridine + phosphate = alpha-D-ribose 1-phosphate + uracil. The catalysed reaction is xanthosine + phosphate = alpha-D-ribose 1-phosphate + xanthine. Functionally, catalyzes the phosphorolysis of diverse nucleosides, yielding D-ribose 1-phosphate and the respective free bases. Can use uridine, adenosine, guanosine, cytidine, thymidine, inosine and xanthosine as substrates. Also catalyzes the reverse reactions. The protein is Pyrimidine/purine nucleoside phosphorylase of Paraburkholderia xenovorans (strain LB400).